The sequence spans 370 residues: MAGFFSLDGGGGGGGGGGNNQEDHRSNTNPPPPVSEAWLWYRNPNVNANANTNVNANAPSSSNAALGTLELWQNHNQQEIMFQHQQHQQRLDLYSSAAGLGVGPSNHNQFDISGETSTAGAGRAAAMMMIRSGGSGGGSGGVSCQDCGNQAKKDCSHMRCRTCCKSRGFECSTHVRSTWVPAAKRRERQQQLATVQPQTQLPRGESVPKRHRENLPATSSSLVCTRIPSHSGLEVGNFPAEVSSSAVFRCVRVSSVEDGEEEFAYQTAVSIGGHIFKGILYDLGPGSSGGGGYNVVAAGESSSGGGGAQQLNLITAGSVTVATASSSTPNLGGIGSSSAAAATYIDPAALYPTPINTFMAGTQFFPNPRS.

The tract at residues 1 to 37 (MAGFFSLDGGGGGGGGGGNNQEDHRSNTNPPPPVSEA) is disordered. Residues 8 to 19 (DGGGGGGGGGGN) show a composition bias toward gly residues. Zn(2+)-binding residues include cysteine 144, cysteine 147, cysteine 155, cysteine 160, cysteine 164, and cysteine 171. Positions 144–171 (CQDCGNQAKKDCSHMRCRTCCKSRGFEC) form a DNA-binding region, zn(2)-C6 fungal-type; degenerate. Residues 271-274 (IGGH) carry the Required for homo- and heterodimerization motif.

Belongs to the SHI protein family. In terms of assembly, forms homodimers and heterodimers with LRP1. Expressed in flowers, seeds and seedlings.

It is found in the nucleus. Functionally, transcription activator that binds DNA on 5'-ACTCTAC-3' and promotes auxin homeostasis-regulating gene expression (e.g. YUC genes), as well as genes affecting stamen development, cell expansion and timing of flowering. Synergistically with other SHI-related proteins, regulates gynoecium, stamen and leaf development in a dose-dependent manner, controlling apical-basal patterning. Promotes style and stigma formation, and influences vascular development during gynoecium development. May also have a role in the formation and/or maintenance of the shoot apical meristem (SAM). In Arabidopsis thaliana (Mouse-ear cress), this protein is Protein SHI RELATED SEQUENCE 1 (SRS1).